The sequence spans 353 residues: uncharacterized protein (353 aa).

5 residues coordinate Mn(2+): aspartate 212, aspartate 223, histidine 287, glutamate 316, and glutamate 330.

This sequence belongs to the peptidase M24B family. The cofactor is Mn(2+).

This is an uncharacterized protein from Bacillus subtilis (strain 168).